Here is a 312-residue protein sequence, read N- to C-terminus: Probable rRNA-processing protein EBP2 (312 aa).

The disordered stretch occupies residues 1 to 32 (MLHHEDESSPESDSDFDASELTDKELQEAFSQ). Acidic residues predominate over residues 8 to 20 (SSPESDSDFDASE). Positions 140-176 (EMAKTDQHMQKIRHKLQLKQASMEKSEKAKQLRALRK) form a coiled coil. The disordered stretch occupies residues 211 to 312 (LDFLEGDQTP…VRQKMKSKRR (102 aa)). Basic residues predominate over residues 282–312 (KGPHRPGKKGGKNANKRPGKNVRQKMKSKRR).

Belongs to the EBP2 family.

The protein resides in the nucleus. Its subcellular location is the nucleolus. Functionally, required for the processing of the 27S pre-rRNA. In Xenopus laevis (African clawed frog), this protein is Probable rRNA-processing protein EBP2 (ebna1bp2).